The following is a 662-amino-acid chain: High affinity sulfate transporter 2 (662 aa).

A disordered region spans residues 1-35 (MSQRVSDQAMAEVIAETRTNSSSRRHGGGDDTPSL). 12 consecutive transmembrane segments (helical) span residues 103–123 (GDFI…LAYA), 128–148 (LDPW…AFMG), 153–173 (IAIG…SNEI), 182–202 (LRLA…LGVC), 205–225 (GFLI…GAAI), 264–284 (WETI…KYIA), 291–311 (FWVS…FVYI), 346–366 (AGVR…MAIG), 383–403 (MVAM…VTTG), 420–440 (VSNI…TPLF), 447–467 (VLAS…AMVL), and 481–501 (GAFF…AVAI). Positions 532-655 (QYPKAEQIPG…LTVADAVATY (124 aa)) constitute an STAS domain.

The protein belongs to the SLC26A/SulP transporter (TC 2.A.53) family.

The protein resides in the membrane. Its function is as follows. High-affinity H(+)/sulfate cotransporter that mediates the uptake of sulfate by plant roots from low concentrations of sulfate in the soil solution. This is High affinity sulfate transporter 2 (ST2) from Stylosanthes hamata (Caribbean stylo).